Here is an 82-residue protein sequence, read N- to C-terminus: Small ribosomal subunit protein uS17 (82 aa).

This sequence belongs to the universal ribosomal protein uS17 family. Part of the 30S ribosomal subunit.

Its function is as follows. One of the primary rRNA binding proteins, it binds specifically to the 5'-end of 16S ribosomal RNA. This chain is Small ribosomal subunit protein uS17, found in Rickettsia rickettsii (strain Iowa).